The sequence spans 128 residues: MSNNIPAELKYVASHEWLRLEEDGTITVGITHHAQELLGDIVFVELPEVGANLAAEEQAGVVESVKAASDVYAPIAGEVVAVNEDLPSAPETANSDPYGAGWFFKLKPANVADYDSLLTAEQYAGEVD.

A Lipoyl-binding domain is found at 25–107 (TITVGITHHA…YGAGWFFKLK (83 aa)). Position 66 is an N6-lipoyllysine (Lys-66).

Belongs to the GcvH family. As to quaternary structure, the glycine cleavage system is composed of four proteins: P, T, L and H. It depends on (R)-lipoate as a cofactor.

Functionally, the glycine cleavage system catalyzes the degradation of glycine. The H protein shuttles the methylamine group of glycine from the P protein to the T protein. This chain is Glycine cleavage system H protein, found in Neisseria meningitidis serogroup B (strain ATCC BAA-335 / MC58).